Here is a 393-residue protein sequence, read N- to C-terminus: Sulfite oxidase (393 aa).

The interval 1–27 is disordered; the sequence is MPGIRGPSEYSQEPPRHPSLKVNAKEP. Residues 10 to 242 are moco domain; the sequence is YSQEPPRHPS…QGFFMQKDYK (233 aa). Mo-molybdopterin-binding positions include 49–53, Cys98, 159–161, His202, Arg207, and 218–220; these read YKRNH, SVD, and SVK. Residues 243–393 are homodimerization; that stretch reads MFPPSVNWDN…VLLRLGHSNL (151 aa). The Microbody targeting signal motif lies at 391 to 393; that stretch reads SNL.

Predominantly monomer; also homodimer. Mo-molybdopterin serves as cofactor.

It is found in the peroxisome. The enzyme catalyses sulfite + O2 + H2O = sulfate + H2O2. It functions in the pathway energy metabolism; sulfur metabolism. In terms of biological role, probably involved in sulfite oxidative detoxification. This is Sulfite oxidase (SOX) from Arabidopsis thaliana (Mouse-ear cress).